Reading from the N-terminus, the 133-residue chain is ATP synthase epsilon chain (133 aa).

Belongs to the ATPase epsilon chain family. In terms of assembly, F-type ATPases have 2 components, CF(1) - the catalytic core - and CF(0) - the membrane proton channel. CF(1) has five subunits: alpha(3), beta(3), gamma(1), delta(1), epsilon(1). CF(0) has three main subunits: a, b and c.

The protein localises to the cellular thylakoid membrane. In terms of biological role, produces ATP from ADP in the presence of a proton gradient across the membrane. The protein is ATP synthase epsilon chain of Prochlorococcus marinus (strain MIT 9303).